The primary structure comprises 303 residues: Cyclin-dependent kinase 4 (303 aa).

At A2 the chain carries N-acetylalanine. The region spanning 6-295 (YEPVAEIGVG…AFRALQHSYL (290 aa)) is the Protein kinase domain. ATP is bound by residues 12 to 20 (IGVGAYGTV) and K35. The required for binding D-type cyclins stretch occupies residues 50 to 56 (PVSTVRE). D140 acts as the Proton acceptor in catalysis. T172 bears the Phosphothreonine; by CAK mark. A Phosphoserine modification is found at S300.

The protein belongs to the protein kinase superfamily. CMGC Ser/Thr protein kinase family. CDC2/CDKX subfamily. As to quaternary structure, component of the D-CDK4 complex, composed of CDK4 and some D-type G1 cyclin (CCND1, CCND2 or CCND3). Interacts directly in the complex with CCND1, CCND2 or CCND3. Interacts with ZNF655. Forms a ternary complex, cyclin D-CDK4-CDKN1B, involved in modulating CDK4 enzymatic activity. Interacts directly with CDKN1B (phosphorylated on 'Tyr-88' and 'Tyr-89'); the interaction allows assembly of the cyclin D-CDK4 complex, Thr-172 phosphorylation, nuclear translocation and enhances the cyclin D-CDK4 complex activity. CDK4 activity is either inhibited or enhanced depending on stoichiometry of complex. The non-tyrosine-phosphorylated form of CDKN1B prevents T-loop phosphorylation of CDK4 producing inactive CDK4. Interacts (unphosphorylated form) with CDK2. Also forms ternary complexes with CDKN1A or CDKN2A. Interacts directly with CDKN1A (via its N-terminal); the interaction promotes the assembly of the cyclin D-CDK4 complex, its nuclear translocation and promotes the cyclin D-dependent enzyme activity of CDK4. Interacts with CCND1; the interaction is prevented with the binding of CCND1 to INSM1 during cell cycle progression. Interacts with SEI1 and CCND1. Probably forms a complex composed of chaperones HSP90 and HSP70, co-chaperones CDC37, PPP5C, TSC1 and client protein TSC2, CDK4, AKT, RAF1 and NR3C1; this complex does not contain co-chaperones STIP1/HOP and PTGES3/p23. Interacts with CEBPA (when phosphorylated). Interacts with FNIP1 and FNIP2. Phosphorylation at Thr-172 is required for enzymatic activity. Phosphorylated, in vitro, at this site by CCNH-CDK7, but, in vivo, appears to be phosphorylated by a proline-directed kinase. In the cyclin D-CDK4-CDKN1B complex, this phosphorylation and consequent CDK4 enzyme activity, is dependent on the tyrosine phosphorylation state of CDKN1B. Thus, in proliferating cells, CDK4 within the complex is phosphorylated on Thr-172 in the T-loop. In resting cells, phosphorylation on Thr-172 is prevented by the non-tyrosine-phosphorylated form of CDKN1B.

The protein localises to the cytoplasm. It localises to the nucleus. It is found in the nucleus membrane. It catalyses the reaction L-seryl-[protein] + ATP = O-phospho-L-seryl-[protein] + ADP + H(+). The catalysed reaction is L-threonyl-[protein] + ATP = O-phospho-L-threonyl-[protein] + ADP + H(+). With respect to regulation, both phosphorylation at Thr-172 and binding of a D-type cyclin are necessary for enzymatic activity. Full activation of the cyclin-D-CDK4 complex appears to require other factors such as recruitment of the substrate via a substrate recruitment motif, and/or formation of the CDKN1B ternary complex. Inhibited by INK4 family members. In resting cells, the non-tyrosine-phosphorylated form of CDKN1B prevents phosphorylation at Thr-172 and inactivation, while, in proliferating cells, tyrosine phosphorylation of CDKN1B allows phosphorylation of Thr-172 of CDK4 and subsequent activation. Ser/Thr-kinase component of cyclin D-CDK4 (DC) complexes that phosphorylate and inhibit members of the retinoblastoma (RB) protein family including RB1 and regulate the cell-cycle during G(1)/S transition. Phosphorylation of RB1 allows dissociation of the transcription factor E2F from the RB/E2F complexes and the subsequent transcription of E2F target genes which are responsible for the progression through the G(1) phase. Hypophosphorylates RB1 in early G(1) phase. Cyclin D-CDK4 complexes are major integrators of various mitogenenic and antimitogenic signals. Also phosphorylates SMAD3 in a cell-cycle-dependent manner and represses its transcriptional activity. Component of the ternary complex, cyclin D/CDK4/CDKN1B, required for nuclear translocation and activity of the cyclin D-CDK4 complex. In Mus musculus (Mouse), this protein is Cyclin-dependent kinase 4 (Cdk4).